A 338-amino-acid polypeptide reads, in one-letter code: MNNAAEITVLGAGSYGTALAISLASNGHKTLLWGHDPKSMQVLAESRSNERFLPGIQFPDCLSIEADLGKALAASKNILVVVPSHVFGDVLKQAKPLLRDDARIVWATKGLEPETGRLLQDVAREQLGEHYPLAVLSGPTFAKELAAGLPTAISVAGTCPQFTHDLVELLHSPKRLRVYANDDFIGIQLGGAVKNVIAIGAGMSDGIGFGANARTALITRGLVELSRLGEAIGADASTFIGMAGLGDLVLTCTDNQSRNRRFGLALGQGKDVITAQEEIGQVVEGYRNTKEVFTLAKRLGVEMPITEQIYQVLYQGKAPVEAAKELLSRDKKSETLKK.

The NADPH site is built by Ser14, Tyr15, His35, and Lys109. The sn-glycerol 3-phosphate site is built by Lys109, Gly138, and Thr140. Ala142 contributes to the NADPH binding site. Residues Lys194, Asp247, Ser257, Arg258, and Asn259 each coordinate sn-glycerol 3-phosphate. The active-site Proton acceptor is the Lys194. An NADPH-binding site is contributed by Arg258. Residues Val282 and Glu284 each coordinate NADPH.

Belongs to the NAD-dependent glycerol-3-phosphate dehydrogenase family.

Its subcellular location is the cytoplasm. The catalysed reaction is sn-glycerol 3-phosphate + NAD(+) = dihydroxyacetone phosphate + NADH + H(+). It carries out the reaction sn-glycerol 3-phosphate + NADP(+) = dihydroxyacetone phosphate + NADPH + H(+). The protein operates within membrane lipid metabolism; glycerophospholipid metabolism. Catalyzes the reduction of the glycolytic intermediate dihydroxyacetone phosphate (DHAP) to sn-glycerol 3-phosphate (G3P), the key precursor for phospholipid synthesis. In Shewanella frigidimarina (strain NCIMB 400), this protein is Glycerol-3-phosphate dehydrogenase [NAD(P)+].